The chain runs to 880 residues: Translation initiation factor IF-2 (880 aa).

Basic and acidic residues-rich tracts occupy residues Q180–K194 and L202–I228. The disordered stretch occupies residues Q180–N289. A compositionally biased stretch (basic residues) spans G249 to G262. The region spanning S380–K549 is the tr-type G domain. The segment at G389–T396 is G1. Position 389-396 (G389–T396) interacts with GTP. A G2 region spans residues G414–H418. The G3 stretch occupies residues D435–G438. Residues D435–H439 and N489–D492 contribute to the GTP site. The segment at N489–D492 is G4. The interval S525–K527 is G5.

The protein belongs to the TRAFAC class translation factor GTPase superfamily. Classic translation factor GTPase family. IF-2 subfamily.

Its subcellular location is the cytoplasm. Its function is as follows. One of the essential components for the initiation of protein synthesis. Protects formylmethionyl-tRNA from spontaneous hydrolysis and promotes its binding to the 30S ribosomal subunits. Also involved in the hydrolysis of GTP during the formation of the 70S ribosomal complex. This is Translation initiation factor IF-2 from Shewanella baltica (strain OS223).